A 543-amino-acid chain; its full sequence is Protein P78/83 (543 aa).

Disordered regions lie at residues glutamine 147–alanine 222, arginine 235–asparagine 325, and methionine 373–proline 400. Over residues alanine 182–alanine 221 the composition is skewed to pro residues. In terms of domain architecture, WH2 spans aspartate 226 to valine 246. Residues proline 271–proline 321 are compositionally biased toward pro residues. The segment covering lysine 375–aspartate 384 has biased composition (polar residues).

In terms of assembly, forms a complex with proteins C42 and E27. Interacts with host actin-related protein 2/3 complex. Interacts with protein Ac102.

The protein resides in the host cytoplasm. Its subcellular location is the host nucleus. Plays a role in the transport of the nucleocapsids from the cytoplasm toward the host nucleus together with the host actin-polymerizing Arp2/3 complex. The polypeptide is Protein P78/83 (P61) (Lepidoptera (butterflies and moths)).